A 213-amino-acid polypeptide reads, in one-letter code: Serine protease inhibitor 5 (213 aa).

A signal peptide spans methionine 1–threonine 22. Positions serine 23–asparagine 28 are excised as a propeptide. The short motif at asparagine 25 to proline 30 is the Vacuolar targeting signal element. Disulfide bonds link cysteine 76–cysteine 125 and cysteine 174–cysteine 183.

It belongs to the protease inhibitor I3 (leguminous Kunitz-type inhibitor) family.

Its subcellular location is the vacuole. Inhibitor of trypsin (serine protease). Protects the plant by inhibiting proteases of invading organisms. The polypeptide is Serine protease inhibitor 5 (Solanum tuberosum (Potato)).